Consider the following 413-residue polypeptide: Floricaula/leafy homolog 1 (413 aa).

Disordered stretches follow at residues E154–T177 and Q191–E239. Positions G201–A210 are enriched in basic and acidic residues. Positions E211–N225 are enriched in acidic residues. 3 consecutive DNA-binding regions follow at residues R238–F242, N307–Y314, and Y378–T381.

This sequence belongs to the FLO/LFY family. In terms of tissue distribution, expressed in floral meristems and in indeterminate vegetative meristems.

The protein localises to the nucleus. Probable transcription factor that act to specify determinacy in the progenitor cells for both flowers and leaves. In Nicotiana tabacum (Common tobacco), this protein is Floricaula/leafy homolog 1 (FL1).